The sequence spans 300 residues: Ribonuclease Z (300 aa).

Zn(2+) contacts are provided by His-63, His-65, Asp-67, His-68, His-140, Asp-207, and His-265. Asp-67 functions as the Proton acceptor in the catalytic mechanism.

It belongs to the RNase Z family. Homodimer. Zn(2+) serves as cofactor.

The catalysed reaction is Endonucleolytic cleavage of RNA, removing extra 3' nucleotides from tRNA precursor, generating 3' termini of tRNAs. A 3'-hydroxy group is left at the tRNA terminus and a 5'-phosphoryl group is left at the trailer molecule.. In terms of biological role, zinc phosphodiesterase, which displays some tRNA 3'-processing endonuclease activity. Probably involved in tRNA maturation, by removing a 3'-trailer from precursor tRNA. The protein is Ribonuclease Z of Ignicoccus hospitalis (strain KIN4/I / DSM 18386 / JCM 14125).